The sequence spans 192 residues: Type 1 phosphatases regulator YPI2 (192 aa).

Disordered stretches follow at residues 1–53 (MLQR…GKHK) and 65–192 (EFGQ…PVQK). Residues 8 to 18 (QTSSSTQTETT) show a composition bias toward low complexity. The span at 25-49 (RRPETRQKEDSKVKWTEDVIDNEHM) shows a compositional bias: basic and acidic residues. A compositionally biased stretch (low complexity) spans 69-79 (SSDESSDSSSD). The segment covering 86 to 103 (YERNNDFDQNHRHSHNFD) has biased composition (basic and acidic residues). The segment covering 134 to 148 (KGNTGMSKPSSSSPD) has biased composition (polar residues). The span at 157-169 (IHKRNKKVRKPKR) shows a compositional bias: basic residues.

Belongs to the YPI1 family.

Its subcellular location is the nucleus. Functionally, regulator of type 1 phosphatases which maintains protein phosphatase activity under strict control. The protein is Type 1 phosphatases regulator YPI2 (YPI2) of Scheffersomyces stipitis (strain ATCC 58785 / CBS 6054 / NBRC 10063 / NRRL Y-11545) (Yeast).